Reading from the N-terminus, the 2067-residue chain is Lipoxygenase homology domain-containing protein 1 (2067 aa).

PLAT domains lie at 43–160 (RVYE…RDLL), 172–287 (NKYE…RDIL), 296–412 (ITYI…RQLY), 425–540 (FPWS…REMT), 553–673 (ARYH…RELL), 684–803 (FRYH…VELY), 814–934 (VHYE…RELL), 969–1087 (TTFS…RDLF), 1100–1225 (VPYE…RELV), 1254–1372 (VLYS…RLFY), 1421–1539 (IPYY…RVFD), 1552–1667 (VLYE…CEMC), 1679–1797 (TSYT…RDFA), 1810–1931 (TTYE…VFEV), and 1948–2064 (VKYE…RDLF).

The protein resides in the cell projection. It localises to the stereocilium. Involved in hearing. Required for normal function of hair cells in the inner ear. The protein is Lipoxygenase homology domain-containing protein 1 (LOXHD1) of Homo sapiens (Human).